The following is a 270-amino-acid chain: Undecaprenyl-diphosphatase (270 aa).

Helical transmembrane passes span 1-21, 92-112, 119-139, 150-170, 193-213, 223-243, and 250-270; these read MTWW…FIPV, FRLG…YVLF, AFGS…LLLL, LSGV…VPGI, FSFL…GLEL, LSLG…IYVV, and GNLQ…LWLL.

Belongs to the UppP family.

It is found in the cell inner membrane. The catalysed reaction is di-trans,octa-cis-undecaprenyl diphosphate + H2O = di-trans,octa-cis-undecaprenyl phosphate + phosphate + H(+). Its function is as follows. Catalyzes the dephosphorylation of undecaprenyl diphosphate (UPP). Confers resistance to bacitracin. In Salinibacter ruber (strain DSM 13855 / M31), this protein is Undecaprenyl-diphosphatase.